The primary structure comprises 181 residues: Peptidyl-tRNA hydrolase 2, mitochondrial (181 aa).

A helical transmembrane segment spans residues 10–32 (YLVHPGTLSLAAGVACGMCLGWG). Residues Lys78, Lys83, Lys97, Lys108, Lys117, and Lys179 each participate in a glycyl lysine isopeptide (Lys-Gly) (interchain with G-Cter in ubiquitin) cross-link.

Belongs to the PTH2 family. As to quaternary structure, monomer. Post-translationally, ubiquitinated by PRKN during mitophagy, leading to its degradation and enhancement of mitophagy. Deubiquitinated by USP30.

Its subcellular location is the mitochondrion outer membrane. It catalyses the reaction an N-acyl-L-alpha-aminoacyl-tRNA + H2O = an N-acyl-L-amino acid + a tRNA + H(+). Peptidyl-tRNA hydrolase which releases tRNAs from the ribosome during protein synthesis. Promotes caspase-independent apoptosis by regulating the function of two transcriptional regulators, AES and TLE1. This is Peptidyl-tRNA hydrolase 2, mitochondrial (Ptrh2) from Mus musculus (Mouse).